The following is a 416-amino-acid chain: tRNA(Met) cytidine acetate ligase (416 aa).

ATP is bound by residues 7 to 20, glycine 102, asparagine 166, and arginine 191; that span reads VAEYNPFHNGHLYL.

It belongs to the TmcAL family.

It is found in the cytoplasm. It catalyses the reaction cytidine(34) in elongator tRNA(Met) + acetate + ATP = N(4)-acetylcytidine(34) in elongator tRNA(Met) + AMP + diphosphate. Functionally, catalyzes the formation of N(4)-acetylcytidine (ac(4)C) at the wobble position of elongator tRNA(Met), using acetate and ATP as substrates. First activates an acetate ion to form acetyladenylate (Ac-AMP) and then transfers the acetyl group to tRNA to form ac(4)C34. This Syntrophomonas wolfei subsp. wolfei (strain DSM 2245B / Goettingen) protein is tRNA(Met) cytidine acetate ligase.